A 289-amino-acid polypeptide reads, in one-letter code: ATP synthase mitochondrial F1 complex assembly factor 2 (289 aa).

The transit peptide at 1–40 (MWRIYPRLRDRWRGLLDRRLSDPTVSVWPGPAPQPPARAY) directs the protein to the mitochondrion. At K133 the chain carries N6-succinyllysine.

This sequence belongs to the ATP12 family. As to quaternary structure, interacts with ATP5F1B; involved in the assembly of the F1 component of the mitochondrial ATP synthase (ATPase). Interacts with FMC1.

It localises to the mitochondrion inner membrane. Plays a role in the assembly of the F1 component of the mitochondrial ATP synthase (ATPase). This chain is ATP synthase mitochondrial F1 complex assembly factor 2, found in Mus musculus (Mouse).